Here is a 530-residue protein sequence, read N- to C-terminus: PC4 and SFRS1-interacting protein (530 aa).

Residues 1 to 64 (MTRDFKPGDL…PKDIFPYSEN (64 aa)) form the PWWP domain. A Glycyl lysine isopeptide (Lys-Gly) (interchain with G-Cter in SUMO2) cross-link involves residue lysine 75. A disordered region spans residues 88 to 349 (PKVKFSSQQA…VEKKRETSMD (262 aa)). The segment covering 92-104 (FSSQQAATKQSNA) has biased composition (polar residues). A phosphoserine mark is found at serine 102, serine 105, and serine 106. The segment covering 113–135 (KETSVSKEDTDHEEKASNEDVTK) has biased composition (basic and acidic residues). Threonine 115 and threonine 122 each carry phosphothreonine. Serine 129 bears the Phosphoserine mark. Residue threonine 141 is modified to Phosphothreonine. Basic residues predominate over residues 144–153 (AARRGRKRKA). Residues 146–156 (RRGRKRKAEKQ) carry the Nuclear localization signal motif. At threonine 167 the chain carries Phosphothreonine. Serine 177 and serine 206 each carry phosphoserine. The segment covering 213–261 (EEDKSKKKGQEEKQPKKQPKKDEEGQKEEDKPRKEPDKKEGKKEVESKR) has biased composition (basic and acidic residues). Serine 271 carries the phosphoserine modification. Threonine 272 is subject to Phosphothreonine. Residues serine 273 and serine 275 each carry the phosphoserine modification. Positions 274 to 283 (DSEEEGDDQE) are enriched in acidic residues. The segment covering 287 to 302 (KRKGGRNFQTAHRRNM) has biased composition (basic residues). The segment covering 305-349 (GQHEKEAADRKRKQEEQMETEQQNKDEGKKPEVKKVEKKRETSMD) has biased composition (basic and acidic residues). Coiled-coil stretches lie at residues 306-334 (QHEK…EGKK) and 371-395 (NRCI…KHTE). The segment at 340–417 (VEKKRETSMD…VSQVIMEKST (78 aa)) is integrase-binding domain (IBD). Serine 434 carries the phosphoserine modification. Threonine 437 carries the post-translational modification Phosphothreonine. Phosphoserine is present on serine 443. Positions 446–473 (EQRQHEEANKTKDQGKKGPNKKLEKEQT) are enriched in basic and acidic residues. Residues 446-530 (EQRQHEEANK…ISLKDSTLDN (85 aa)) are disordered. A compositionally biased stretch (polar residues) spans 474-494 (GSKTLNGGSDAQDGNQPQHNG). Residues 498-530 (EDSKDNHEASTKKKPSSEERETEISLKDSTLDN) are compositionally biased toward basic and acidic residues. Phosphoserine is present on serine 514. At arginine 517 the chain carries Citrulline. Serine 522 carries the post-translational modification Phosphoserine. Threonine 527 is subject to Phosphothreonine.

Belongs to the HDGF family. Monomer. Interacts with IFRD1/PC4. Isoform 2 interacts with SFRS1. Isoform 1 interacts (via IBD domain) with POGZ (via IBM motif) and CDCA7L (via IBM motifs). Interacts (via IBD domain) with KMT2A (via IBM motifs) with a moderate affinity whereas interacts with the KMT2A-MEN1 complex with a greater affinity; MEN1 enhances interaction of KMT2A with PSIP1. Interacts with fusion protein KMT2A-MLLT3. Interacts (via IBD domain) with IWS1 (via IBM motif), MED1 (via IBM motif) and DBF4 (via IBM motifs). In terms of assembly, (Microbial infection) Interacts (via IBD domain) with human HIV-1 integrase protein (HIV-1 IN), determining its nuclear localization, its tight association with chromatin and its protection from the proteasome. As to quaternary structure, (Microbial infection) Interacts with HIV-2 IN. In terms of processing, citrullinated by PADI4. As to expression, widely expressed. Expressed at high level in the thymus. Expressed in fetal and adult brain. Expressed in neurons, but not astrocytes. Markedly elevated in fetal as compared to adult brain. In the adult brain, expressed in the subventricular zone (SVZ), in hippocampus, and undetectable elsewhere. In the fetal brain, expressed in the germinal neuroepithelium and cortical plate regions.

The protein localises to the nucleus. Its function is as follows. Transcriptional coactivator involved in neuroepithelial stem cell differentiation and neurogenesis. Involved in particular in lens epithelial cell gene regulation and stress responses. May play an important role in lens epithelial to fiber cell terminal differentiation. May play a protective role during stress-induced apoptosis. Isoform 2 is a more general and stronger transcriptional coactivator. Isoform 2 may also act as an adapter to coordinate pre-mRNA splicing. Cellular cofactor for lentiviral integration. This chain is PC4 and SFRS1-interacting protein (PSIP1), found in Homo sapiens (Human).